We begin with the raw amino-acid sequence, 176 residues long: Translation initiation factor IF-3 (176 aa).

The protein belongs to the IF-3 family. In terms of assembly, monomer.

Its subcellular location is the cytoplasm. In terms of biological role, IF-3 binds to the 30S ribosomal subunit and shifts the equilibrium between 70S ribosomes and their 50S and 30S subunits in favor of the free subunits, thus enhancing the availability of 30S subunits on which protein synthesis initiation begins. The polypeptide is Translation initiation factor IF-3 (Streptococcus mutans serotype c (strain ATCC 700610 / UA159)).